Reading from the N-terminus, the 781-residue chain is Catenin beta-1 (781 aa).

Alanine 2 bears the N-acetylalanine mark. The interaction with VCL stretch occupies residues 2–23 (ATQADLMELDMAMEPDRKAAVS). Serine 23 is modified (phosphoserine; by GSK3-beta; alternate). A glycan (O-linked (GlcNAc) serine; alternate) is linked at serine 23. A Phosphoserine; by GSK3-beta modification is found at serine 29. Phosphoserine; by GSK3-beta and HIPK2 is present on residues serine 33 and serine 37. Positions 34–56 (GIHSGATTTAPSLSGKGNPEEED) are disordered. A Phosphothreonine; by GSK3-beta modification is found at threonine 41. Residue serine 45 is modified to Phosphoserine. Lysine 49 carries the N6-acetyllysine modification. Phosphotyrosine; by PTK6 is present on tyrosine 64. A Phosphotyrosine; by FYN and PTK6 modification is found at tyrosine 142. ARM repeat units lie at residues 151 to 191 (RAIP…IMRS), 193 to 234 (QMVS…IFKS), 235 to 276 (GGIP…VRLA), 277 to 318 (GGLQ…ILAS), 319 to 360 (GGPQ…IVEA), 361 to 389 (GGMQALGLHLTDPSQRLVQNCLWTLRNLS), 400 to 441 (GLLG…VCQV), 442 to 484 (GGIE…AQNA), 489 to 530 (YGLP…LREQ), 531 to 571 (GAIP…EIVE), 594 to 636 (NTIP…AEGA), and 637 to 666 (TAPLTELLHSRNEGVATYAAAVLFRMSEDK). Residues 156–178 (LTKLLNDEDQVVVNKAAVMVHQL) are interaction with BCL9. Serine 191 is modified (phosphoserine; by CDK5). Position 246 is a phosphoserine; by CDK5 (serine 246). 2 positions are modified to phosphotyrosine: tyrosine 331 and tyrosine 333. Serine 552 bears the Phosphoserine; by AMPK mark. Position 556 is a phosphothreonine (threonine 556). Cysteine 619 carries the post-translational modification S-nitrosocysteine. Position 675 is a phosphoserine (serine 675). The segment at 705 to 781 (EPLGYRQDDP…NQLAWFDTDL (77 aa)) is disordered. The span at 734–745 (MMEHEMGGHHPG) shows a compositional bias: basic and acidic residues. An interaction with SCRIB region spans residues 772–781 (NQLAWFDTDL).

This sequence belongs to the beta-catenin family. In terms of assembly, two separate complex-associated pools are found in the cytoplasm. The majority is present as component of an E-cadherin/ catenin adhesion complex composed of at least E-cadherin/CDH1 and beta-catenin/CTNNB1, and possibly alpha-catenin/CTNNA1; the complex is located to adherens junctions. The stable association of CTNNA1 is controversial as CTNNA1 was shown not to bind to F-actin when assembled in the complex. Alternatively, the CTNNA1-containing complex may be linked to F-actin by other proteins such as LIMA1. Another cytoplasmic pool is part of a large complex containing AXIN1, AXIN2, APC, CSNK1A1 and GSK3B that promotes phosphorylation on N-terminal Ser and Thr residues and ubiquitination of CTNNB1 via BTRC and its subsequent degradation by the proteasome. Wnt-dependent activation of DVL antagonizes the action of GSK3B. When GSK3B activity is inhibited the complex dissociates, CTNNB1 is dephosphorylated and is no longer targeted for destruction. The stabilized protein translocates to the nucleus, where it binds TCF/LEF-1 family members, BCL9, BCL9L and possibly also RUVBL1 and CHD8. Binds CTNNBIP and EP300. CTNNB1 forms a ternary complex with LEF1 and EP300 that is disrupted by CTNNBIP1 binding. Interacts with TAX1BP3 (via the PDZ domain); this interaction inhibits the transcriptional activity of CTNNB1. Interacts with AJAP1, BAIAP1, CARM1, CTNNA3, CXADR and PCDH11Y. Binds NHERF1. Interacts with GLIS2 and SLC30A9. Interacts with XIRP1 and MUC1. Interacts with PTPRU (via the cytoplasmic juxtamembrane domain) and with EMD. Interacts with SCRIB. Interacts with TNIK. Interacts with SESTD1 and TRPC4. Interacts directly with AXIN1; the interaction is regulated by CDK2 phosphorylation of AXIN1. Interacts with CAV1. Interacts with TRPV4. The TRPV4 and CTNNB1 complex can interact with CDH1. Interacts with VCL. Interacts with PTPRJ. Interacts with PKT7. Interacts with FAT1 (via the cytoplasmic domain). Interacts with NANOS1 and NDRG2. Interacts with NEK2, CDK2 and CDK5. Interacts with PTK6. Interacts with SOX7; this interaction may lead to proteasomal degradation of active CTNNB1 and thus inhibition of Wnt/beta-catenin-stimulated transcription. Identified in a complex with HINT1 and MITF. Interacts with FHIT. The CTNNB1 and TCF4 complex interacts with PML. Interacts with FERMT2. Identified in a complex with TCF4 and FERMT2. Interacts with RORA. May interact with P-cadherin/CDH3. Interacts with RAPGEF2. Interacts with RNF220. Interacts with CTNND2. Interacts (via the C-terminal region) with CBY1. The complex composed, at least, of APC, CTNNB1 and GSK3B interacts with JPT1; the interaction requires the inactive form of GSK3B (phosphorylated at 'Ser-9'). Interacts with DLG5. Interacts with FAM53B; promoting translocation to the nucleus. Interacts with TMEM170B. Interacts with AHI1. Interacts with GID8. Component of an cadherin:catenin adhesion complex composed of at least of CDH26, beta-catenin/CTNNB1, alpha-catenin/CTNNA1 and p120 catenin/CTNND1. Forms a complex comprising APPL1, RUVBL2, APPL2, HDAC1 and HDAC2. Interacts with IRF2BPL; mediates the ubiquitination and degradation of CTNNB1. Interacts with LMBR1L and AMFR. Interacts with LMBR1L. Interacts with SOX30; prevents interaction of CTNNB1 with TCF7L2/TCF4 and leads to inhibition of Wnt signaling. Interacts with SOX9; inhibiting CTNNB1 activity by competing with the binding sites of TCF/LEF within CTNNB1, thereby inhibiting the Wnt signaling. Interacts with SPN/CD43 cytoplasmic tail. Interacts (when phosphorylated at Tyr-333) with isoform M2 of PKM (PKM2); promoting transcription activation. Interacts with PKP2 (via HEAD domain). Interacts with CDH1. Interacts (when unphosphorylated) with FLYWCH1, perhaps preventing interaction of CTNNB1 with TCF4, and thereby regulating transcription activation; phosphorylation of CTNNB1 may inhibit the interaction. Interacts (via the central armadillo domains) with probable transcriptional regulator ADNP (via N-terminal region); interaction is direct and stabilizes CTNNB1 by modulating its phosphorylation by glycogen synthase kinase-3 beta GSK3B. Interacts with NR5A2. Interacts with DSG2; the interaction promotes localization of CTNNB1 at cell junctions thus reducing its nuclear localization and subsequent transcription of CTNNB1/TCF-target genes. Post-translationally, phosphorylation by GSK3B requires prior phosphorylation of Ser-45 by another kinase. Phosphorylation proceeds then from Thr-41 to Ser-33. Phosphorylated by NEK2. EGF stimulates tyrosine phosphorylation. Phosphorylated on Ser-33 and Ser-37 by HIPK2. This phosphorylation triggers proteasomal degradation. Phosphorylation at Ser-552 by AMPK promotes stabilization of the protein, enhancing TCF/LEF-mediated transcription. Phosphorylation on Ser-191 and Ser-246 by CDK5. Phosphorylation by CDK2 regulates insulin internalization. Phosphorylation by PTK6 at Tyr-64, Tyr-142, Tyr-331 and/or Tyr-333 with the predominant site at Tyr-64 is not essential for inhibition of transcriptional activity. Phosphorylation by SRC at Tyr-333 promotes interaction with isoform M2 of PKM (PKM2); promoting transcription activation. Ubiquitinated by the SCF(BTRC) E3 ligase complex when phosphorylated by GSK3B, leading to its degradation. Ubiquitinated by a E3 ubiquitin ligase complex containing UBE2D1, SIAH1, CACYBP/SIP, SKP1, APC and TBL1X, leading to its subsequent proteasomal degradation. Ubiquitinated and degraded following interaction with SOX9. Ubiquitinated via 'Lys-11'- and 'Lys-29'-linked ubiquitin chains by UBR5, leading to its stabilization. In terms of processing, S-nitrosylation at Cys-619 within adherens junctions promotes VEGF-induced, NO-dependent endothelial cell permeability by disrupting interaction with E-cadherin, thus mediating disassembly adherens junctions. Post-translationally, O-glycosylation at Ser-23 decreases nuclear localization and transcriptional activity, and increases localization to the plasma membrane and interaction with E-cadherin CDH1. Deacetylated at Lys-49 by SIRT1.

It is found in the cytoplasm. It localises to the nucleus. The protein localises to the cytoskeleton. The protein resides in the cell junction. Its subcellular location is the adherens junction. It is found in the cell membrane. It localises to the microtubule organizing center. The protein localises to the centrosome. The protein resides in the spindle pole. Its subcellular location is the synapse. It is found in the cilium basal body. Its function is as follows. Key downstream component of the canonical Wnt signaling pathway. In the absence of Wnt, forms a complex with AXIN1, AXIN2, APC, CSNK1A1 and GSK3B that promotes phosphorylation on N-terminal Ser and Thr residues and ubiquitination of CTNNB1 via BTRC and its subsequent degradation by the proteasome. In the presence of Wnt ligand, CTNNB1 is not ubiquitinated and accumulates in the nucleus, where it acts as a coactivator for transcription factors of the TCF/LEF family, leading to activate Wnt responsive genes. Also acts as a coactivator for other transcription factors, such as NR5A2. Promotes epithelial to mesenchymal transition/mesenchymal to epithelial transition (EMT/MET) via driving transcription of CTNNB1/TCF-target genes. Involved in the regulation of cell adhesion, as component of an E-cadherin:catenin adhesion complex. Acts as a negative regulator of centrosome cohesion. Involved in the CDK2/PTPN6/CTNNB1/CEACAM1 pathway of insulin internalization. Blocks anoikis of malignant kidney and intestinal epithelial cells and promotes their anchorage-independent growth by down-regulating DAPK2. Disrupts PML function and PML-NB formation by inhibiting RANBP2-mediated sumoylation of PML. Promotes neurogenesis by maintaining sympathetic neuroblasts within the cell cycle. Involved in chondrocyte differentiation via interaction with SOX9: SOX9-binding competes with the binding sites of TCF/LEF within CTNNB1, thereby inhibiting the Wnt signaling. Acts as a positive regulator of odontoblast differentiation during mesenchymal tooth germ formation, via promoting the transcription of differentiation factors such as LEF1, BMP2 and BMP4. Activity is repressed in a MSX1-mediated manner at the bell stage of mesenchymal tooth germ formation which prevents premature differentiation of odontoblasts. The chain is Catenin beta-1 from Bos taurus (Bovine).